A 147-amino-acid polypeptide reads, in one-letter code: Ubiquitin-conjugating enzyme E2 D2B (147 aa).

Residues 1-147 (MALKRIHKEL…AREWTQKYAM (147 aa)) form the UBC core domain. The Glycyl thioester intermediate role is filled by Cys85.

The protein belongs to the ubiquitin-conjugating enzyme family. As to quaternary structure, interacts with CNOT4 (via RING domain). As to expression, testis-specific. Mainly expressed in the round spermatids (at protein level).

The enzyme catalyses S-ubiquitinyl-[E1 ubiquitin-activating enzyme]-L-cysteine + [E2 ubiquitin-conjugating enzyme]-L-cysteine = [E1 ubiquitin-activating enzyme]-L-cysteine + S-ubiquitinyl-[E2 ubiquitin-conjugating enzyme]-L-cysteine.. Its pathway is protein modification; protein ubiquitination. Catalyzes the covalent attachment of ubiquitin to other proteins. Mediates the selective degradation of short-lived and abnormal proteins. Functions in the E6/E6-AP-induced ubiquitination of p53/TP53. Mediates ubiquitination of PEX5 and SQSTM1 and autoubiquitination of STUB1 and TRAF6. Involved in the signal-induced conjugation and subsequent degradation of NFKBIA, FBXW2-mediated GCM1 ubiquitination and degradation, MDM2-dependent degradation of p53/TP53 and the activation of MAVS in the mitochondria by RIGI in response to viral infection Plays a role in early maturation of the testis. The protein is Ubiquitin-conjugating enzyme E2 D2B (Ube2d2b) of Rattus norvegicus (Rat).